The primary structure comprises 237 residues: GrpE protein homolog, mitochondrial (237 aa).

The protein belongs to the GrpE family. Probable component of the PAM complex at least composed of a mitochondrial HSP70 protein, GrpE, tim-44, tim-16 and tim-14/dnj-21.

It localises to the mitochondrion matrix. In terms of biological role, essential component of the PAM complex, a complex required for the translocation of transit peptide-containing proteins from the inner membrane into the mitochondrial matrix in an ATP-dependent manner. Seems to control the nucleotide-dependent binding of mitochondrial HSP70 to substrate proteins. In Caenorhabditis elegans, this protein is GrpE protein homolog, mitochondrial.